The chain runs to 229 residues: Ribonuclease 3 (229 aa).

An RNase III domain is found at W4–G133. Residue E46 participates in Mg(2+) binding. D50 is an active-site residue. 2 residues coordinate Mg(2+): D119 and E122. E122 is a catalytic residue. Residues D159–H228 form the DRBM domain.

It belongs to the ribonuclease III family. In terms of assembly, homodimer. It depends on Mg(2+) as a cofactor.

The protein resides in the cytoplasm. It catalyses the reaction Endonucleolytic cleavage to 5'-phosphomonoester.. In terms of biological role, digests double-stranded RNA. Involved in the processing of primary rRNA transcript to yield the immediate precursors to the large and small rRNAs (23S and 16S). Processes some mRNAs, and tRNAs when they are encoded in the rRNA operon. Processes pre-crRNA and tracrRNA of type II CRISPR loci if present in the organism. The sequence is that of Ribonuclease 3 from Listeria monocytogenes serovar 1/2a (strain ATCC BAA-679 / EGD-e).